Here is a 195-residue protein sequence, read N- to C-terminus: Imidazoleglycerol-phosphate dehydratase (195 aa).

The protein belongs to the imidazoleglycerol-phosphate dehydratase family.

The protein localises to the cytoplasm. The catalysed reaction is D-erythro-1-(imidazol-4-yl)glycerol 3-phosphate = 3-(imidazol-4-yl)-2-oxopropyl phosphate + H2O. It functions in the pathway amino-acid biosynthesis; L-histidine biosynthesis; L-histidine from 5-phospho-alpha-D-ribose 1-diphosphate: step 6/9. This Clostridium botulinum (strain Alaska E43 / Type E3) protein is Imidazoleglycerol-phosphate dehydratase.